We begin with the raw amino-acid sequence, 1332 residues long: Xanthine dehydrogenase/oxidase (1332 aa).

One can recognise a 2Fe-2S ferredoxin-type domain in the interval 4–91 (DELVFFVNGK…HVAVTTVEGI (88 aa)). [2Fe-2S] cluster contacts are provided by Cys43, Cys48, Cys51, Cys73, Cys113, Cys116, Cys148, and Cys150. Residues 229–414 (FEGERVTWIQ…LSIEIPYSRE (186 aa)) form the FAD-binding PCMH-type domain. FAD is bound by residues 257–264 (LVVGNTEI), Phe337, 347–351 (SLGGN), Asp360, Leu404, and Lys422. Cys535 and Cys992 are disulfide-bonded. Positions 767 and 798 each coordinate Mo-molybdopterin. Substrate-binding residues include Glu802 and Arg880. A Mo-molybdopterin-binding site is contributed by Arg912. The substrate site is built by Phe914 and Thr1010. Ala1079 provides a ligand contact to Mo-molybdopterin. The Proton acceptor role is filled by Glu1261.

The protein belongs to the xanthine dehydrogenase family. As to quaternary structure, homodimer. Interacts with BTN1A1. Requires [2Fe-2S] cluster as cofactor. FAD is required as a cofactor. Mo-molybdopterin serves as cofactor. In terms of processing, subject to partial proteolysis; this alters the enzyme from the dehydrogenase form (D) to the oxidase form (O). Post-translationally, contains sulfhydryl groups that are easily oxidized (in vitro); this alters the enzyme from the dehydrogenase form (D) to the oxidase form (O). As to expression, detected in milk (at protein level).

Its subcellular location is the cytoplasm. The protein localises to the peroxisome. It is found in the secreted. It catalyses the reaction xanthine + NAD(+) + H2O = urate + NADH + H(+). The catalysed reaction is hypoxanthine + NAD(+) + H2O = xanthine + NADH + H(+). It carries out the reaction xanthine + O2 + H2O = urate + H2O2. With respect to regulation, can be converted from the dehydrogenase form (D) to the oxidase form (O) irreversibly by proteolysis or reversibly through the oxidation of sulfhydryl groups. Key enzyme in purine degradation. Catalyzes the oxidation of hypoxanthine to xanthine. Catalyzes the oxidation of xanthine to uric acid. Contributes to the generation of reactive oxygen species. The protein is Xanthine dehydrogenase/oxidase (XDH) of Bos taurus (Bovine).